A 161-amino-acid polypeptide reads, in one-letter code: Nucleotide-binding protein Bcenmc03_2579 (161 aa).

The protein belongs to the YajQ family.

Functionally, nucleotide-binding protein. The chain is Nucleotide-binding protein Bcenmc03_2579 from Burkholderia orbicola (strain MC0-3).